Reading from the N-terminus, the 1073-residue chain is Serine/threonine-protein phosphatase 6 regulatory ankyrin repeat subunit C (1073 aa).

28 ANK repeats span residues 7–36 (TDQP…NINV), 40–69 (ERRT…NVNA), 73–102 (VWLT…DVNA), 106–135 (YWQT…TVNV), 139–168 (TGRT…SLST), 172–201 (KDRQ…DVMC), 205–234 (KGYT…EIDE), 238–267 (FGNT…NVNQ), 271–301 (KGFT…DVNF), 305–334 (EGKS…EIDC), 338–367 (YGNT…DTAR), 371–400 (HDMF…LYSI), 422–451 (LGRT…DLRR), 455–484 (FGRT…SINE), 488–544 (KGCT…DPSL), 548–578 (QGYT…CLED), 583–612 (IPVS…NLDV), 616–645 (KGRT…SALV), 650–679 (RKWT…RADI), 686–715 (HGQT…TADA), 719–748 (RGRT…FVLC), 752–781 (KGRT…STDP), 789–818 (SGYS…FAYL), 821–851 (NPFT…KIVN), 856–885 (KGRT…EVDT), 889–919 (LGRT…NITV), 923–952 (NKNT…DLGL), and 959–988 (ALQM…TVLA).

In terms of assembly, protein phosphatase 6 (PP6) holoenzyme is proposed to be a heterotrimeric complex formed by the catalytic subunit, a SAPS domain-containing subunit (PP6R) and an ankyrin repeat-domain containing regulatory subunit (ARS).

Functionally, putative regulatory subunit of protein phosphatase 6 (PP6) that may be involved in the recognition of phosphoprotein substrates. The polypeptide is Serine/threonine-protein phosphatase 6 regulatory ankyrin repeat subunit C (ANKRD52) (Gallus gallus (Chicken)).